The primary structure comprises 52 residues: Large ribosomal subunit protein bL33 (52 aa).

Belongs to the bacterial ribosomal protein bL33 family.

This chain is Large ribosomal subunit protein bL33, found in Anaeromyxobacter dehalogenans (strain 2CP-C).